A 292-amino-acid polypeptide reads, in one-letter code: GTP cyclohydrolase FolE2 (292 aa).

This sequence belongs to the GTP cyclohydrolase IV family.

The enzyme catalyses GTP + H2O = 7,8-dihydroneopterin 3'-triphosphate + formate + H(+). It functions in the pathway cofactor biosynthesis; 7,8-dihydroneopterin triphosphate biosynthesis; 7,8-dihydroneopterin triphosphate from GTP: step 1/1. Its function is as follows. Converts GTP to 7,8-dihydroneopterin triphosphate. The polypeptide is GTP cyclohydrolase FolE2 (Staphylococcus carnosus (strain TM300)).